The primary structure comprises 197 residues: Secreted RxLR effector protein 48 (197 aa).

The first 27 residues, 1–27 (MCCVSWNWVLACTFLLIFLSWWNCCND), serve as a signal peptide directing secretion. The short motif at 58–79 (RLLRVNLAANAEVLTHEIEEEK) is the RxLR-dEER element.

This sequence belongs to the RxLR effector family.

Its subcellular location is the secreted. It is found in the host nucleus. The protein resides in the host cytoplasm. Secreted effector that completely suppresses the host cell death induced by cell death-inducing proteins. The protein is Secreted RxLR effector protein 48 of Plasmopara viticola (Downy mildew of grapevine).